Here is a 494-residue protein sequence, read N- to C-terminus: Probable cytosol aminopeptidase (494 aa).

Mn(2+) contacts are provided by Lys-260 and Asp-265. The active site involves Lys-272. Residues Asp-283, Asp-342, and Glu-344 each contribute to the Mn(2+) site. Arg-346 is a catalytic residue.

It belongs to the peptidase M17 family. It depends on Mn(2+) as a cofactor.

The protein localises to the cytoplasm. It catalyses the reaction Release of an N-terminal amino acid, Xaa-|-Yaa-, in which Xaa is preferably Leu, but may be other amino acids including Pro although not Arg or Lys, and Yaa may be Pro. Amino acid amides and methyl esters are also readily hydrolyzed, but rates on arylamides are exceedingly low.. The catalysed reaction is Release of an N-terminal amino acid, preferentially leucine, but not glutamic or aspartic acids.. Functionally, presumably involved in the processing and regular turnover of intracellular proteins. Catalyzes the removal of unsubstituted N-terminal amino acids from various peptides. The protein is Probable cytosol aminopeptidase of Bacillus thuringiensis (strain Al Hakam).